A 409-amino-acid chain; its full sequence is MSSHPIQVFSEIGKLKKVMLHRPGKELENLLPDYLERLLFDDIPFLEDAQKEHDAFAQALRDEGIEVLYLEQLAAESLTSPEIRDQFIEEYLDEANIRDRQTKVAIRELLHGIKDNQELVEKTMAGIQKVELPEIPDEAKDLTDLVESDYPFAIDPMPNLYFTRDPFATIGNAVSLNHMFADTRNRETLYGKYIFKYHPIYGGKVDLVYNREEDTRIEGGDELVLSKDVLAVGISQRTDAASIEKLLVNIFKKNVGFKKVLAFEFANNRKFMHLDTVFTMVDYDKFTIHPEIEGDLHVYSVTYENEKLKIVEEKGDLAELLAQNLGVEKVHLIRCGGGNIVAAAREQWNDGSNTLTIAPGVVVVYDRNTVTNKILEEYGLRLIKIRGSELVRGRGGPRCMSMPFEREEV.

Catalysis depends on cysteine 399, which acts as the Amidino-cysteine intermediate.

The protein belongs to the arginine deiminase family.

Its subcellular location is the cytoplasm. It carries out the reaction L-arginine + H2O = L-citrulline + NH4(+). It participates in amino-acid degradation; L-arginine degradation via ADI pathway; carbamoyl phosphate from L-arginine: step 1/2. The polypeptide is Arginine deiminase (Streptococcus pneumoniae (strain JJA)).